Here is a 507-residue protein sequence, read N- to C-terminus: ATP synthase subunit alpha, chloroplastic (507 aa).

170–177 (GDRQTGKT) is a binding site for ATP.

It belongs to the ATPase alpha/beta chains family. F-type ATPases have 2 components, CF(1) - the catalytic core - and CF(0) - the membrane proton channel. CF(1) has five subunits: alpha(3), beta(3), gamma(1), delta(1), epsilon(1). CF(0) has four main subunits: a, b, b' and c.

It is found in the plastid. The protein resides in the chloroplast thylakoid membrane. It carries out the reaction ATP + H2O + 4 H(+)(in) = ADP + phosphate + 5 H(+)(out). Functionally, produces ATP from ADP in the presence of a proton gradient across the membrane. The alpha chain is a regulatory subunit. In Anthoceros angustus (Hornwort), this protein is ATP synthase subunit alpha, chloroplastic.